The following is a 119-amino-acid chain: uncharacterized protein (119 aa).

Residues 78 to 119 (SHRKSQQHQTQGNQVLRGTRKLESPTVGPRPGLRRQHTRNFL) form a disordered region. A compositionally biased stretch (polar residues) spans 84–93 (QHQTQGNQVL). Basic residues predominate over residues 109 to 119 (GLRRQHTRNFL).

This is an uncharacterized protein from Saccharomyces cerevisiae (strain ATCC 204508 / S288c) (Baker's yeast).